Here is a 153-residue protein sequence, read N- to C-terminus: MPLLLSGRGFRRELESAGCMAVFAPLEGGAETRLLRRLRGAGYRTQLSSARGLGDPEVFLFQKHGIRPPHLGHQSVGRGAAVGEVQEVMPLLGESMLGTKPVVLWLLEGQVLSRSELSALCDLCRREPRLKVVVEMGGARSLRWQPLKELLSN.

This sequence belongs to the complex I NdhN subunit family. NDH-1 can be composed of about 15 different subunits; different subcomplexes with different compositions have been identified which probably have different functions.

It is found in the cellular thylakoid membrane. It carries out the reaction a plastoquinone + NADH + (n+1) H(+)(in) = a plastoquinol + NAD(+) + n H(+)(out). The enzyme catalyses a plastoquinone + NADPH + (n+1) H(+)(in) = a plastoquinol + NADP(+) + n H(+)(out). In terms of biological role, NDH-1 shuttles electrons from an unknown electron donor, via FMN and iron-sulfur (Fe-S) centers, to quinones in the respiratory and/or the photosynthetic chain. The immediate electron acceptor for the enzyme in this species is believed to be plastoquinone. Couples the redox reaction to proton translocation, and thus conserves the redox energy in a proton gradient. Cyanobacterial NDH-1 also plays a role in inorganic carbon-concentration. This is NAD(P)H-quinone oxidoreductase subunit N from Synechococcus sp. (strain CC9311).